A 620-amino-acid chain; its full sequence is Somatic embryogenesis receptor kinase 4 (620 aa).

Residues Met-1–Gly-33 form the signal peptide. The Extracellular portion of the chain corresponds to Asp-34–Gly-234. LRR repeat units lie at residues Asn-100–Leu-122, Glu-124–Leu-146, Lys-148–Val-170, Gln-171–Ser-193, and Leu-194–Ser-215. Asn-110 is a glycosylation site (N-linked (GlcNAc...) asparagine). Residues Asn-156, Asn-189, and Asn-202 are each glycosylated (N-linked (GlcNAc...) asparagine). Residues Leu-205–Gln-227 form a disordered region. The span at Pro-209–Ser-224 shows a compositional bias: pro residues. The helical transmembrane segment at Gly-235–Leu-255 threads the bilayer. Over Arg-256 to Arg-620 the chain is Cytoplasmic. At Thr-291 the chain carries Phosphothreonine. Residues Phe-294–Asn-591 enclose the Protein kinase domain. Ser-295 carries the phosphoserine modification. ATP is bound by residues Leu-300–Val-308 and Lys-322. 2 positions are modified to phosphoserine: Ser-375 and Ser-378. Asp-421 serves as the catalytic Proton acceptor. Phosphothreonine occurs at positions 454, 455, and 460. The residue at position 468 (Tyr-468) is a Phosphotyrosine. Ser-470 carries the phosphoserine modification. Thr-471 carries the phosphothreonine modification. Ser-475 carries the phosphoserine modification. The residue at position 551 (Thr-551) is a Phosphothreonine.

It belongs to the protein kinase superfamily. Ser/Thr protein kinase family. Interacts with the EF-Tu receptor EFR and FLS2 in a specific ligand-induced manner. Interacts with TMK4/BARK1. Interacts with ERECTA in a EPF2-induced manner. Interacts with ERL1 in a EPF1-induced manner. Interacts with TMM. Forms a complex with MIK2 in response to SCOOP12 perception. Autophosphorylated on Thr and Tyr residues.

The protein resides in the cell membrane. It carries out the reaction L-seryl-[protein] + ATP = O-phospho-L-seryl-[protein] + ADP + H(+). The enzyme catalyses L-threonyl-[protein] + ATP = O-phospho-L-threonyl-[protein] + ADP + H(+). The catalysed reaction is L-tyrosyl-[protein] + ATP = O-phospho-L-tyrosyl-[protein] + ADP + H(+). Functionally, dual specificity kinase acting on both serine/threonine- and tyrosine-containing substrates. Positively regulates the BR-dependent plant growth pathway and negatively regulates the BR-independent cell-death pathway. Required during SCOOP small peptides (e.g. SCOOP10 and SCOOP12) perception and signaling; associates with MIK2 as a coreceptor upon MIK2 perception of SCOOP peptides, and relays the signaling through the activation of receptor-like cytosolic kinases (RLCKs) BIK1 and PBL1. The polypeptide is Somatic embryogenesis receptor kinase 4 (Arabidopsis thaliana (Mouse-ear cress)).